The sequence spans 137 residues: Basic phospholipase A2 homolog 2 (137 aa).

The first 16 residues, 1 to 16 (MRTLWIMAVLLVGVEG), serve as a signal peptide directing secretion. 7 disulfide bridges follow: cysteine 42–cysteine 131, cysteine 44–cysteine 60, cysteine 59–cysteine 111, cysteine 65–cysteine 137, cysteine 66–cysteine 104, cysteine 73–cysteine 97, and cysteine 91–cysteine 102. An important for membrane-damaging activities in eukaryotes and bacteria; heparin-binding region spans residues 121–133 (KKYRYYLKPLCKK).

This sequence belongs to the phospholipase A2 family. Group II subfamily. K49 sub-subfamily. As to quaternary structure, homodimer; non-covalently linked. Binds to heparin. It binds long-chain fatty acids covalently by a rapid, spontaneous, and autocatalytic process. When acylated, it binds to the surface of liposomes and isolated muscle membranes, with the fatty acid moiety inserted into the lipid bilayer and possibly acting as an anchor. As to expression, expressed by the venom gland.

The protein localises to the secreted. Heparin inhibits the myotoxic activity. Suramin inhibits the myotoxic activity. High level of membrane cholesterol content reduces cytolytic activity, whereas low level of membrane cholesterol content increases cytolytic activity. Functionally, snake venom phospholipase A2 homolog that lacks enzymatic activity. Is myotoxic and induces a dose-dependent edema in the mouse foot pad. Also exhibits strong anticoagulant effects by binding to factor Xa (F10) and inhibiting the prothrombinase activity (IC(50) is 3 nM). In addition, it shows cytotoxic activity to a variety of cell types and bactericidal activity to a variety of Gram-negative and Gram-positive bacteria. Also induces a very rapid release of large amounts of potassium ions and ATP from muscle cells, which accounts for the pain reaction characteristic of viperid envenomations. The released ATP amplifies the effect of the myotoxins, acting as a 'danger signal', which spreads and causes further damage by acting on purinergic receptors. A model of myotoxic mechanism has been proposed: an apo Lys49-PLA2 is activated by the entrance of a hydrophobic molecule (e.g. fatty acid) at the hydrophobic channel of the protein leading to a reorientation of a monomer. This reorientation causes a transition between 'inactive' to 'active' states, causing alignment of C-terminal and membrane-docking sites (MDoS) side-by-side and putting the membrane-disruption sites (MDiS) in the same plane, exposed to solvent and in a symmetric position for both monomers. The MDoS region stabilizes the toxin on membrane by the interaction of charged residues with phospholipid head groups. Subsequently, the MDiS region destabilizes the membrane with penetration of hydrophobic residues. This insertion causes a disorganization of the membrane, allowing an uncontrolled influx of ions (i.e. calcium and sodium), and eventually triggering irreversible intracellular alterations and cell death. The chain is Basic phospholipase A2 homolog 2 from Bothrops asper (Terciopelo).